A 636-amino-acid polypeptide reads, in one-letter code: Interleukin-27 receptor subunit alpha (636 aa).

A signal peptide spans 1 to 32 (MRGGRGAPFWLWPLPKLALLPLLWVLFQRTRP). Residues 33–516 (QGSAGPLQCY…HLPDNTLRWK (484 aa)) are Extracellular-facing. Residues N51 and N76 are each glycosylated (N-linked (GlcNAc...) asparagine). The Fibronectin type-III 1 domain occupies 131 to 231 (PRLGPDVDFS…PILSFQTPPS (101 aa)). The WSXWS motif signature appears at 217–221 (WGEWS). Residues N302, N311, N374, N382, and N467 are each glycosylated (N-linked (GlcNAc...) asparagine). Fibronectin type-III domains lie at 322–417 (APRS…LAPL) and 419–511 (GPTL…LPDN). A helical membrane pass occupies residues 517–537 (VLPGILFLWGLFLLGCGLSLA). The Cytoplasmic segment spans residues 538–636 (TSGRCYHLRH…LGPPRPQVLA (99 aa)). A Box 1 motif motif is present at residues 554–562 (VWEKVPDPA). The disordered stretch occupies residues 587 to 636 (EVEEMEPPPVMESSQPAQATAPLDSGYEKHFLPTPEELGLLGPPRPQVLA). Residues 618 to 628 (LPTPEELGLLG) show a composition bias toward low complexity.

It belongs to the type I cytokine receptor family. Type 2 subfamily. In terms of assembly, component of a receptor complex composed of IL6ST/GP130, IL27RA/WSX1 and CNTFR which interacts with the neuroprotective peptide humanin. In terms of tissue distribution, highly expressed in lymphoid tissues such as spleen, lymph nodes and peripheral blood leukocytes. Weakly expressed in other tissues examined including heart, brain, fetal and adult lung, liver, skeletal muscle, kidney, pancreas, prostate, testis, ovary, small intestine, kidney and colon. In the lymphoid system, higher level expression in CD4+ T-cell subsets than in CD8+ T-cell subsets. Also weaker expression in CD19+ B-cells and monocytes.

The protein localises to the membrane. Receptor for IL27. Requires IL6ST/GP130 to mediate signal transduction in response to IL27. This signaling system acts through STAT3 and STAT1. Acts as a receptor for the neuroprotective peptide humanin as part of a complex with IL6ST/GP130 and CNTFR. Involved in the regulation of Th1-type immune responses. Also appears to be involved in innate defense mechanisms. The chain is Interleukin-27 receptor subunit alpha (IL27RA) from Homo sapiens (Human).